A 644-amino-acid polypeptide reads, in one-letter code: Probable potassium transport system protein Kup 2 (644 aa).

Positions 1–21 are disordered; that stretch reads MSSDAAAVADRDGSSPGHGGH. 12 helical membrane passes run 26–46, 69–89, 120–140, 155–175, 183–203, 231–251, 265–285, 312–332, 360–380, 390–410, 419–439, and 444–464; these read LGAM…TSPL, VLSL…VAII, IILL…ITPA, AGFA…LFMI, VGML…VLGT, LAFL…ALYA, WLVF…AMIL, LVIL…TGAF, IYIP…VMSF, YGIA…VVLI, LAAP…GANL, and DGGW…TTWG.

It belongs to the HAK/KUP transporter (TC 2.A.72) family.

Its subcellular location is the cell inner membrane. The catalysed reaction is K(+)(in) + H(+)(in) = K(+)(out) + H(+)(out). Functionally, transport of potassium into the cell. Likely operates as a K(+):H(+) symporter. The sequence is that of Probable potassium transport system protein Kup 2 from Rhizorhabdus wittichii (strain DSM 6014 / CCUG 31198 / JCM 15750 / NBRC 105917 / EY 4224 / RW1) (Sphingomonas wittichii).